The sequence spans 561 residues: Protein NRT1/ PTR FAMILY 5.13 (561 aa).

The chain crosses the membrane as a helical span at residues 78-98 (AWSGISTILPLLGAFVADAFL). Phosphothreonine is present on Thr103. 10 helical membrane passes run 104–124 (IIIASFIYVLGLAFLTLSAFL), 133–153 (SSPSSFLNALFFFSLYLVAIG), 183–203 (FFNWWYLSMCAGIGLAILVVV), 211–231 (WALGFGIPCVFMVISLVLFVL), 324–344 (IPVWLTTLAYAIPFAQYMTFF), 361–381 (IPPASLQVLISISIVLFVPIY), 405–425 (IGTGMVLATLTMVVAALVESK), 447–467 (IWWLFPQYMLLGLADVHTLVG), 486–506 (AIYLSAMGVGSLLSSLLIYLI), and 530–550 (YFYWLLAVVSAVGFFTFLFIS).

Belongs to the major facilitator superfamily. Proton-dependent oligopeptide transporter (POT/PTR) (TC 2.A.17) family. In terms of tissue distribution, expressed in roots, flowers and siliques. Detected in stems and leaves.

It is found in the membrane. In Arabidopsis thaliana (Mouse-ear cress), this protein is Protein NRT1/ PTR FAMILY 5.13 (NPF5.13).